Reading from the N-terminus, the 103-residue chain is Large ribosomal subunit protein bL21 (103 aa).

Positions 83–92 (YRRKKGHRQP) are enriched in basic residues. Positions 83–103 (YRRKKGHRQPFSRVTVEKIEA) are disordered.

It belongs to the bacterial ribosomal protein bL21 family. In terms of assembly, part of the 50S ribosomal subunit. Contacts protein L20.

Its function is as follows. This protein binds to 23S rRNA in the presence of protein L20. The polypeptide is Large ribosomal subunit protein bL21 (Pelotomaculum thermopropionicum (strain DSM 13744 / JCM 10971 / SI)).